The sequence spans 313 residues: 3'-5' exoribonuclease YhaM (313 aa).

A DNA-binding region (OB) is located at residues 22–90; sequence SSVKGTASNG…QLKIRQIRQA (69 aa). Residues 163-279 enclose the HD domain; the sequence is HVVSMLRLAK…LHQIDLMDAS (117 aa).

It belongs to the YhaM family.

Its function is as follows. Shows a 3'-5' exoribonuclease activity. This chain is 3'-5' exoribonuclease YhaM, found in Listeria monocytogenes serovar 1/2a (strain ATCC BAA-679 / EGD-e).